Consider the following 453-residue polypeptide: Chromosomal replication initiator protein DnaA (453 aa).

The domain I, interacts with DnaA modulators stretch occupies residues 1-71 (MSEKEIWEKV…QAILFDVVGY (71 aa)). The interval 71–114 (YEVKPHFITTEELANYSNNETATPKEATKPSTETTEDNHVLGRE) is domain II. Residues 115-331 (QFNAHNTFDT…GALTRLLAYS (217 aa)) are domain III, AAA+ region. ATP-binding residues include Gly-159, Gly-161, Lys-162, and Thr-163. Residues 332–453 (QLLGKPITTE…ENLEKEIRNV (122 aa)) are domain IV, binds dsDNA.

The protein belongs to the DnaA family. In terms of assembly, oligomerizes as a right-handed, spiral filament on DNA at oriC.

Its subcellular location is the cytoplasm. In terms of biological role, plays an essential role in the initiation and regulation of chromosomal replication. ATP-DnaA binds to the origin of replication (oriC) to initiate formation of the DNA replication initiation complex once per cell cycle. Binds the DnaA box (a 9 base pair repeat at the origin) and separates the double-stranded (ds)DNA. Forms a right-handed helical filament on oriC DNA; dsDNA binds to the exterior of the filament while single-stranded (ss)DNA is stabiized in the filament's interior. The ATP-DnaA-oriC complex binds and stabilizes one strand of the AT-rich DNA unwinding element (DUE), permitting loading of DNA polymerase. After initiation quickly degrades to an ADP-DnaA complex that is not apt for DNA replication. Binds acidic phospholipids. The protein is Chromosomal replication initiator protein DnaA of Staphylococcus aureus (strain MRSA252).